Consider the following 203-residue polypeptide: Imidazoleglycerol-phosphate dehydratase (203 aa).

The protein belongs to the imidazoleglycerol-phosphate dehydratase family.

The protein resides in the cytoplasm. The enzyme catalyses D-erythro-1-(imidazol-4-yl)glycerol 3-phosphate = 3-(imidazol-4-yl)-2-oxopropyl phosphate + H2O. It participates in amino-acid biosynthesis; L-histidine biosynthesis; L-histidine from 5-phospho-alpha-D-ribose 1-diphosphate: step 6/9. This Deinococcus geothermalis (strain DSM 11300 / CIP 105573 / AG-3a) protein is Imidazoleglycerol-phosphate dehydratase.